The sequence spans 151 residues: Large ribosomal subunit protein bL9 (151 aa).

It belongs to the bacterial ribosomal protein bL9 family.

In terms of biological role, binds to the 23S rRNA. This is Large ribosomal subunit protein bL9 from Nitrosospira multiformis (strain ATCC 25196 / NCIMB 11849 / C 71).